The following is a 122-amino-acid chain: Large ribosomal subunit protein uL14 (122 aa).

It belongs to the universal ribosomal protein uL14 family. In terms of assembly, part of the 50S ribosomal subunit. Forms a cluster with proteins L3 and L19. In the 70S ribosome, L14 and L19 interact and together make contacts with the 16S rRNA in bridges B5 and B8.

Binds to 23S rRNA. Forms part of two intersubunit bridges in the 70S ribosome. The protein is Large ribosomal subunit protein uL14 of Paramagnetospirillum magneticum (strain ATCC 700264 / AMB-1) (Magnetospirillum magneticum).